Consider the following 1169-residue polypeptide: Flocculation protein FLO10 (1169 aa).

An N-terminal signal peptide occupies residues M1 to G24. The PA14 domain occupies P111–G271. N122, N157, and N279 each carry an N-linked (GlcNAc...) asparagine glycan. A run of 10 repeats spans residues S303–Y326, S330–S356, S357–S383, S384–S419, S420–S446, S447–S482, S483–S509, S510–S545, S546–S572, and S573–S608. The interval S303–S572 is 6 X 27 AA approximate repeats, Ser/Thr-rich. The segment at S384–S608 is 4 X 36 AA approximate repeats, Ser/Thr-rich. N-linked (GlcNAc...) asparagine glycosylation occurs at N389. The N-linked (GlcNAc...) asparagine glycan is linked to N452. A glycan (N-linked (GlcNAc...) asparagine) is linked at N515. N-linked (GlcNAc...) asparagine glycans are attached at residues N578, N656, and N686. The segment covering T798–S819 has biased composition (low complexity). Disordered regions lie at residues T798–S837, T856–R920, and R1070–S1107. Over residues T856–T884 the composition is skewed to polar residues. N-linked (GlcNAc...) asparagine glycosylation occurs at N879. Positions S886 to P902 are enriched in low complexity. The span at K906 to F916 shows a compositional bias: polar residues. The span at T1077–S1107 shows a compositional bias: low complexity. N-linked (GlcNAc...) asparagine glycosylation is found at N1092 and N1099. Residue G1146 is the site of GPI-anchor amidated glycine attachment. A propeptide spans I1147–V1169 (removed in mature form).

Belongs to the flocculin family. Extensively O-glycosylated. In terms of processing, the GPI-anchor is attached to the protein in the endoplasmic reticulum and serves to target the protein to the cell surface. There, the glucosamine-inositol phospholipid moiety is cleaved off and the GPI-modified mannoprotein is covalently attached via its lipidless GPI glycan remnant to the 1,6-beta-glucan of the outer cell wall layer.

The protein localises to the secreted. Its subcellular location is the cell wall. It is found in the membrane. Cell wall protein that participates directly in adhesive cell-cell interactions during yeast flocculation, a reversible, asexual and Ca(2+)-dependent process in which cells adhere to form aggregates (flocs) consisting of thousands of cells. The lectin-like protein sticks out of the cell wall of flocculent cells and selectively binds mannose residues in the cell walls of adjacent cells. Activity is inhibited by mannose, glucose, maltose and sucrose. Also involved in cell-substrate adhesion, haploid invasive growth and diploid pseudohyphae formation. The chain is Flocculation protein FLO10 (FLO10) from Saccharomyces cerevisiae (strain ATCC 204508 / S288c) (Baker's yeast).